A 429-amino-acid polypeptide reads, in one-letter code: UDP-N-acetylglucosamine 1-carboxyvinyltransferase 2 (429 aa).

22–23 (KN) contributes to the phosphoenolpyruvate binding site. Arg-93 contacts UDP-N-acetyl-alpha-D-glucosamine. The active-site Proton donor is the Cys-117. Cys-117 bears the 2-(S-cysteinyl)pyruvic acid O-phosphothioketal mark. UDP-N-acetyl-alpha-D-glucosamine is bound by residues 122–126 (RPIDQ), Asp-305, and Ile-327.

It belongs to the EPSP synthase family. MurA subfamily.

Its subcellular location is the cytoplasm. The enzyme catalyses phosphoenolpyruvate + UDP-N-acetyl-alpha-D-glucosamine = UDP-N-acetyl-3-O-(1-carboxyvinyl)-alpha-D-glucosamine + phosphate. The protein operates within cell wall biogenesis; peptidoglycan biosynthesis. Functionally, cell wall formation. Adds enolpyruvyl to UDP-N-acetylglucosamine. The chain is UDP-N-acetylglucosamine 1-carboxyvinyltransferase 2 from Bacillus anthracis.